The primary structure comprises 718 residues: Telomeric repeat-binding factor 2 (718 aa).

2 disordered regions span residues 1 to 22 (MAAKRSRAAMEEQEKTSTRSDD) and 219 to 286 (NSER…GAPE). Basic and acidic residues-rich tracts occupy residues 8-22 (AAMEEQEKTSTRSDD) and 219-228 (NSERAEEPKR). The interval 24–220 (EQAVNRWVLQ…LVTMMKSLNS (197 aa)) is TRFH dimerization. Tandem repeats lie at residues 257 to 269 (GTLRRAETAGGVA), 270 to 282 (GAPSCPEMAKDPT), 283 to 295 (GAPEHVGTVKDAV), 296 to 308 (RAPCPAESTEDSQ), 309 to 321 (GTPRCAETARDVM), 322 to 334 (GAPSPSEMTKDLL), 335 to 347 (GAPKCTETARDVV), 348 to 360 (RAPSPAESTKDPV), 361 to 373 (GTPGHAETARDVA), 374 to 386 (RAPSPAETTKNLP), 387 to 399 (GAPECADTVKNTV), 400 to 412 (RAPSPAERRKDLV), 413 to 425 (RAPKRAETARDVV), 426 to 438 (RAPSPAERVKDTA), and 439 to 451 (GASEPMKSASYPT). The tract at residues 257–451 (GTLRRAETAG…EPMKSASYPT (195 aa)) is 15 X 13 AA approximate tandem repeats. Disordered stretches follow at residues 342 to 455 (TARD…ASQP) and 524 to 641 (FNKL…WSDE). Over residues 405–425 (AERRKDLVRAPKRAETARDVV) the composition is skewed to basic and acidic residues. The span at 533–543 (PSPQQMSPSVS) shows a compositional bias: polar residues. Residues 545–550 (RTKRRK) carry the Nuclear localization signal motif. Residues 584–595 (SQCSKSSESPDS) show a composition bias toward low complexity. Residues 615–630 (PVSTKRSSQQRWNSSY) are compositionally biased toward polar residues. The HTH myb-type domain maps to 664 to 717 (KKQKWTVQESEWIKDGVRKYGEGRWKTISEKYPFQNRTSVQIKDRYRTMKKLGI). Positions 688–713 (WKTISEKYPFQNRTSVQIKDRYRTMK) form a DNA-binding region, H-T-H motif.

Homodimer. Component of the shelterin complex (telosome). Interacts with TERF2IP/RAP1. As to expression, highly expressed in embryo.

It localises to the nucleus. The protein localises to the chromosome. The protein resides in the telomere. Its function is as follows. Binds the telomeric double-stranded 5'-TTAGGG-3' repeat and plays a central role in telomere maintenance and protection against end-to-end fusion of chromosomes. In addition to its telomeric DNA-binding role, required to recruit a number of factors and enzymes required for telomere protection, including the shelterin complex, TERF2IP/RAP1 and DCLRE1B/Apollo. Component of the shelterin complex (telosome) that is involved in the regulation of telomere length and protection. Shelterin associates with arrays of double-stranded 5'-TTAGGG-3' repeats added by telomerase and protects chromosome ends; without its protective activity, telomeres are no longer hidden from the DNA damage surveillance and chromosome ends are inappropriately processed by DNA repair pathways. Together with DCLRE1B/Apollo, plays a key role in telomeric loop (T loop) formation by generating 3' single-stranded overhang at the leading end telomeres: T loops have been proposed to protect chromosome ends from degradation and repair. Required both to recruit DCLRE1B/Apollo to telomeres and activate the exonuclease activity of DCLRE1B/Apollo. Together with DCLRE1B/Apollo, required to control the amount of DNA topoisomerase (TOP1, TOP2A and TOP2B) needed for telomere replication during fork passage and prevent aberrant telomere topology. Recruits TERF2IP/RAP1 to telomeres, thereby participating in to repressing homology-directed repair (HDR), which can affect telomere length. This Gallus gallus (Chicken) protein is Telomeric repeat-binding factor 2 (TERF2).